The primary structure comprises 224 residues: Transcriptional regulatory protein TctD (224 aa).

A Response regulatory domain is found at 2 to 116; that stretch reads RLLLAEDNRE…ELDARLRALL (115 aa). Aspartate 51 is modified (4-aspartylphosphate). The segment at residues 121–219 is a DNA-binding region (ompR/PhoB-type); it reads GQVHEVQQLG…LRGLGYVLER (99 aa).

In terms of biological role, transcriptional activator of the tctI tricarboxylate transport system operon. In Salmonella typhimurium (strain SL1344), this protein is Transcriptional regulatory protein TctD (tctD).